The chain runs to 329 residues: Replication factor C small subunit 1 (329 aa).

ATP is bound at residue 44–51; sequence GPPGTGKT.

Belongs to the activator 1 small subunits family. RfcS subfamily. As to quaternary structure, heteromultimer composed of small subunits (RfcS) and large subunits (RfcL).

In terms of biological role, part of the RFC clamp loader complex which loads the PCNA sliding clamp onto DNA. In Pyrobaculum arsenaticum (strain DSM 13514 / JCM 11321 / PZ6), this protein is Replication factor C small subunit 1.